Here is a 232-residue protein sequence, read N- to C-terminus: Ubiquinone biosynthesis O-methyltransferase (232 aa).

4 residues coordinate S-adenosyl-L-methionine: arginine 36, glycine 55, aspartate 76, and leucine 120.

The protein belongs to the methyltransferase superfamily. UbiG/COQ3 family.

It catalyses the reaction a 3-demethylubiquinol + S-adenosyl-L-methionine = a ubiquinol + S-adenosyl-L-homocysteine + H(+). The enzyme catalyses a 3-(all-trans-polyprenyl)benzene-1,2-diol + S-adenosyl-L-methionine = a 2-methoxy-6-(all-trans-polyprenyl)phenol + S-adenosyl-L-homocysteine + H(+). Its pathway is cofactor biosynthesis; ubiquinone biosynthesis. In terms of biological role, O-methyltransferase that catalyzes the 2 O-methylation steps in the ubiquinone biosynthetic pathway. The protein is Ubiquinone biosynthesis O-methyltransferase of Pseudomonas aeruginosa (strain ATCC 15692 / DSM 22644 / CIP 104116 / JCM 14847 / LMG 12228 / 1C / PRS 101 / PAO1).